Reading from the N-terminus, the 300-residue chain is 33 kDa chaperonin (300 aa).

Disulfide bonds link cysteine 235/cysteine 237 and cysteine 269/cysteine 272.

It belongs to the HSP33 family. Under oxidizing conditions two disulfide bonds are formed involving the reactive cysteines. Under reducing conditions zinc is bound to the reactive cysteines and the protein is inactive.

It localises to the cytoplasm. Functionally, redox regulated molecular chaperone. Protects both thermally unfolding and oxidatively damaged proteins from irreversible aggregation. Plays an important role in the bacterial defense system toward oxidative stress. The chain is 33 kDa chaperonin from Pseudomonas syringae pv. syringae (strain B728a).